Reading from the N-terminus, the 309-residue chain is Taste receptor type 2 member 114 (309 aa).

The Extracellular portion of the chain corresponds to 1-7 (MLSTMEG). Residues 8–28 (VLLSVSTSEAVLGIVGNTFIA) form a helical membrane-spanning segment. Topologically, residues 29–43 (LVNCMDYNRNKKLSN) are cytoplasmic. A helical transmembrane segment spans residues 44 to 64 (IGFILTGLAISRICLVLILIT). Over 65–87 (EAYIKIFYPQLLSPVNIIELISY) the chain is Extracellular. The helical transmembrane segment at 88–108 (LWIIICQLNVWFATSLSIFYF) threads the bilayer. Residues 109–127 (LKIANFSHYIFVWLKRRID) are Cytoplasmic-facing. A helical transmembrane segment spans residues 128 to 148 (LVFFFLIGCLLISWLFSFPVV). Over 149 to 182 (AKMVKDNKMLYINTSWQIHMKKSELIINYVFTNG) the chain is Extracellular. An N-linked (GlcNAc...) asparagine glycan is attached at Asn-161. The chain crosses the membrane as a helical span at residues 183–203 (GVFLFFMIMLIVCFLLIISLW). Over 204-233 (RHRRQMESNKLGFRDLNTEVHVRTIKVLLS) the chain is Cytoplasmic. A helical transmembrane segment spans residues 234–254 (FIILFILHFMGITINVICLLI). Over 255 to 259 (PESNL) the chain is Extracellular. A helical transmembrane segment spans residues 260–280 (LFMFGLTTAFIYPGCHSLILI). Residues 281–309 (LANSRLKQCSVMILQLLKCCENGKELRDT) lie on the Cytoplasmic side of the membrane.

The protein belongs to the G-protein coupled receptor T2R family.

The protein localises to the membrane. Its function is as follows. Putative taste receptor which may play a role in the perception of bitterness. The polypeptide is Taste receptor type 2 member 114 (Mus musculus (Mouse)).